We begin with the raw amino-acid sequence, 256 residues long: Bialaphos biosynthetic pathway regulatory protein (256 aa).

The 66-residue stretch at 184–249 (ETADAIDVSD…QLGARAAECR (66 aa)) folds into the HTH luxR-type domain. Positions 208 to 227 (DVAMARSLGISTRTLRRVIT) form a DNA-binding region, H-T-H motif.

Involved in the regulation of the biosynthesis of phosphinothricin tripeptide (PTT), also known as bialaphos (BA), a natural-product antibiotic and potent herbicide. This Streptomyces hygroscopicus protein is Bialaphos biosynthetic pathway regulatory protein (brpA).